The sequence spans 570 residues: Trans-cinnamate:CoA ligase, peroxisomal (570 aa).

The Microbody targeting signal signature appears at 568–570 (ARL).

The protein belongs to the ATP-dependent AMP-binding enzyme family. Monomer. It depends on K(+) as a cofactor. In terms of tissue distribution, mostly expressed in flower organs, with highest levels in corollas and petal limbs, and, to a lesser extent, in petal tubes, sepals, pistils, stamen, stigma, anthers and ovaries. Also present at low levels in leaves, stems and roots.

The protein localises to the peroxisome. It carries out the reaction (E)-4-coumarate + ATP + CoA = (E)-4-coumaroyl-CoA + AMP + diphosphate. It catalyses the reaction (E)-caffeate + ATP + CoA = (E)-caffeoyl-CoA + AMP + diphosphate. The catalysed reaction is (E)-cinnamate + ATP + CoA = (E)-cinnamoyl-CoA + AMP + diphosphate. It participates in phenylpropanoid metabolism; trans-cinnamate biosynthesis. Its pathway is phytoalexin biosynthesis; 3,4',5-trihydroxystilbene biosynthesis; 3,4',5-trihydroxystilbene from trans-4-coumarate: step 1/2. In terms of biological role, involved in the biosynthesis of floral volatile benzenoid/phenylpropanoid (FVBP) scent (e.g. benzylbenzoate, phenylethylbenzoate, and methylbenzoate). Catalyzes the formation of CoA esters of cinnamic acid, and, with lower efficiency, of 4-coumaric acid and caffeic acid. In Petunia hybrida (Petunia), this protein is Trans-cinnamate:CoA ligase, peroxisomal.